Reading from the N-terminus, the 210-residue chain is Proteasome subunit beta (210 aa).

Residues 1–9 (MDNDKYLKG) constitute a propeptide, removed in mature form; by autocatalysis. Residue Thr-10 is the Nucleophile of the active site.

The protein belongs to the peptidase T1B family. As to quaternary structure, the 20S proteasome core is composed of 14 alpha and 14 beta subunits that assemble into four stacked heptameric rings, resulting in a barrel-shaped structure. The two inner rings, each composed of seven catalytic beta subunits, are sandwiched by two outer rings, each composed of seven alpha subunits. The catalytic chamber with the active sites is on the inside of the barrel. Has a gated structure, the ends of the cylinder being occluded by the N-termini of the alpha-subunits. Is capped at one or both ends by the proteasome regulatory ATPase, PAN.

The protein localises to the cytoplasm. It catalyses the reaction Cleavage of peptide bonds with very broad specificity.. Its activity is regulated as follows. The formation of the proteasomal ATPase PAN-20S proteasome complex, via the docking of the C-termini of PAN into the intersubunit pockets in the alpha-rings, triggers opening of the gate for substrate entry. Interconversion between the open-gate and close-gate conformations leads to a dynamic regulation of the 20S proteasome proteolysis activity. Its function is as follows. Component of the proteasome core, a large protease complex with broad specificity involved in protein degradation. This chain is Proteasome subunit beta, found in Methanosarcina mazei (strain ATCC BAA-159 / DSM 3647 / Goe1 / Go1 / JCM 11833 / OCM 88) (Methanosarcina frisia).